Here is a 205-residue protein sequence, read N- to C-terminus: Glycerol-3-phosphate acyltransferase (205 aa).

Over 1–3 (MSA) the chain is Periplasmic. The chain crosses the membrane as a helical span at residues 4 to 24 (IAPGMILFAYLCGSISSAILV). Over 25–52 (CRIAGLPDPRESGSGNPGATNVLRIGGK) the chain is Cytoplasmic. A helical membrane pass occupies residues 53 to 73 (GAAVAVLIFDILKGMLPVWGA). The Periplasmic portion of the chain corresponds to 74 to 80 (YALGITP). Residues 81 to 101 (FWLGLIAIAACLGHIWPVFFG) form a helical membrane-spanning segment. At 102–111 (FKGGKGVATA) the chain is on the cytoplasmic side. The helical transmembrane segment at 112–132 (FGAIAPIGWDLTGVIAGTWLL) threads the bilayer. Over 133–137 (TVLLS) the chain is Periplasmic. Residues 138-158 (GYSSLGAIVSALIAPFYVWWF) traverse the membrane as a helical segment. At 159 to 205 (KPQFTFPVSMLSCLILLRHHDNIQRLWRRQETKIWTKLKKKREKESK) the chain is on the cytoplasmic side.

Belongs to the PlsY family. Probably interacts with PlsX.

The protein localises to the cell inner membrane. The enzyme catalyses sn-glycerol 3-phosphate + an acyl-CoA = a 1-acyl-sn-glycero-3-phosphate + CoA. The catalysed reaction is a fatty acyl-[ACP] + sn-glycerol 3-phosphate = a 1-acyl-sn-glycero-3-phosphate + holo-[ACP]. The protein operates within lipid metabolism; phospholipid metabolism. Catalyzes the transfer of an acyl group from acyl-ACP to glycerol-3-phosphate (G3P) to form lysophosphatidic acid (LPA). This enzyme can also utilize acyl-CoA as fatty acyl donor, but not acyl-PO(4). The sequence is that of Glycerol-3-phosphate acyltransferase from Salmonella arizonae (strain ATCC BAA-731 / CDC346-86 / RSK2980).